Reading from the N-terminus, the 335-residue chain is Methionine import ATP-binding protein MetN 1 (335 aa).

One can recognise an ABC transporter domain in the interval 2–242; the sequence is IEFQNVHKTY…PKHPTTRRFV (241 aa). ATP is bound at residue 38–45; that stretch reads GHSGAGKS.

Belongs to the ABC transporter superfamily. Methionine importer (TC 3.A.1.24) family. In terms of assembly, the complex is composed of two ATP-binding proteins (MetN), two transmembrane proteins (MetI) and a solute-binding protein (MetQ).

The protein localises to the cell inner membrane. It catalyses the reaction L-methionine(out) + ATP + H2O = L-methionine(in) + ADP + phosphate + H(+). It carries out the reaction D-methionine(out) + ATP + H2O = D-methionine(in) + ADP + phosphate + H(+). In terms of biological role, part of the ABC transporter complex MetNIQ involved in methionine import. Responsible for energy coupling to the transport system. The polypeptide is Methionine import ATP-binding protein MetN 1 (Pseudomonas fluorescens (strain ATCC BAA-477 / NRRL B-23932 / Pf-5)).